The primary structure comprises 44 residues: Omega-plectoxin-Pt1a (44 aa).

5 cysteine pairs are disulfide-bonded: Cys3–Cys17, Cys10–Cys23, Cys16–Cys35, Cys20–Cys42, and Cys25–Cys33. Thr44 carries the post-translational modification Threonine amide. A lipid anchor (O-palmitoyl threonine) is attached at Thr44.

The protein belongs to the neurotoxin 02 (plectoxin) family. 02 (plectoxin) subfamily. Contains 5 disulfide bonds. In terms of processing, acylation by palmitate is required for biological activity. As to expression, expressed by the venom gland.

The protein localises to the secreted. In terms of biological role, toxin that inhibits presynaptic voltage-gated calcium channel (Cav) in Drosophila nerve terminals, most likely through specific block of the Cav2 channel (known as Dmca1A). This is Omega-plectoxin-Pt1a from Plectreurys tristis (Spider).